The following is a 329-amino-acid chain: uncharacterized protein (329 aa).

Positions methionine 1–alanine 22 are cleaved as a signal peptide.

This is an uncharacterized protein from Arabidopsis thaliana (Mouse-ear cress).